The primary structure comprises 406 residues: Tryptophan synthase beta chain (406 aa).

Position 99 is an N6-(pyridoxal phosphate)lysine (Lys99).

Belongs to the TrpB family. In terms of assembly, tetramer of two alpha and two beta chains. The cofactor is pyridoxal 5'-phosphate.

The enzyme catalyses (1S,2R)-1-C-(indol-3-yl)glycerol 3-phosphate + L-serine = D-glyceraldehyde 3-phosphate + L-tryptophan + H2O. Its pathway is amino-acid biosynthesis; L-tryptophan biosynthesis; L-tryptophan from chorismate: step 5/5. In terms of biological role, the beta subunit is responsible for the synthesis of L-tryptophan from indole and L-serine. The polypeptide is Tryptophan synthase beta chain (Rhizobium johnstonii (strain DSM 114642 / LMG 32736 / 3841) (Rhizobium leguminosarum bv. viciae)).